We begin with the raw amino-acid sequence, 1167 residues long: Kinesin-like protein KIN-14M (1167 aa).

A disordered region spans residues 93–130 (PRKENDPGTQNSEGRRKIPKNPAMSEPSSPLSQTTLSS). A compositionally biased stretch (low complexity) spans 117 to 130 (SEPSSPLSQTTLSS). Coiled coils occupy residues 271 to 333 (VHQM…KEEM), 366 to 398 (AKYR…AMKS), and 432 to 489 (KQEL…ESRS). The Kinesin motor domain occupies 572-900 (NIRVHCRIRP…LKFADRVSGV (329 aa)). 656–663 (GQTGSGKT) contacts ATP. Positions 907–944 (ANKEGKDIKEFKEQLSLLKDKIAKKDEEISRLQLQSHN) form a coiled coil. Disordered regions lie at residues 955–974 (SLLK…SKIQ) and 1083–1167 (PDQD…KRWT). Residues 958 to 972 (KHSSSSPGISSLGSK) show a composition bias toward low complexity. 2 stretches are compositionally biased toward polar residues: residues 1113–1124 (ASRTTTPKTPQS) and 1151–1167 (TQAT…KRWT).

The protein belongs to the TRAFAC class myosin-kinesin ATPase superfamily. Kinesin family. KIN-14 subfamily.

This chain is Kinesin-like protein KIN-14M, found in Oryza sativa subsp. japonica (Rice).